Consider the following 370-residue polypeptide: Probable phosphoserine aminotransferase (370 aa).

Arg-45 is a binding site for L-glutamate. Residues 79-80 (GT), Trp-105, Thr-154, Asp-175, and Gln-198 contribute to the pyridoxal 5'-phosphate site. The residue at position 199 (Lys-199) is an N6-(pyridoxal phosphate)lysine. 240 to 241 (NT) contributes to the pyridoxal 5'-phosphate binding site.

It belongs to the class-V pyridoxal-phosphate-dependent aminotransferase family. SerC subfamily. As to quaternary structure, homodimer. Requires pyridoxal 5'-phosphate as cofactor.

It catalyses the reaction O-phospho-L-serine + 2-oxoglutarate = 3-phosphooxypyruvate + L-glutamate. The catalysed reaction is 4-(phosphooxy)-L-threonine + 2-oxoglutarate = (R)-3-hydroxy-2-oxo-4-phosphooxybutanoate + L-glutamate. It functions in the pathway amino-acid biosynthesis; L-serine biosynthesis; L-serine from 3-phospho-D-glycerate: step 2/3. The protein operates within cofactor biosynthesis; pyridoxine 5'-phosphate biosynthesis; pyridoxine 5'-phosphate from D-erythrose 4-phosphate: step 3/5. In terms of biological role, catalyzes the reversible conversion of 3-phosphohydroxypyruvate to phosphoserine and of 3-hydroxy-2-oxo-4-phosphonooxybutanoate to phosphohydroxythreonine. This is Probable phosphoserine aminotransferase from Caenorhabditis elegans.